The primary structure comprises 1132 residues: DNA topoisomerase 2 (1132 aa).

ATP contacts are provided by residues asparagine 68, asparagine 100, 137–139, and 150–157; these read SSN and GKNGLGVK. The interval 327–329 is interaction with DNA; that stretch reads NKP. 363 to 365 contributes to the ATP binding site; the sequence is QNK. One can recognise a Toprim domain in the interval 442-577; it reads CTLIVCEGLS…NLKDFPFISS (136 aa). 3 residues coordinate Mg(2+): glutamate 448, aspartate 538, and aspartate 540. The Topo IIA-type catalytic domain occupies 713-1125; it reads LPHLIDGLKE…NEGQMWLKDI (413 aa). Tyrosine 803 functions as the O-(5'-phospho-DNA)-tyrosine intermediate in the catalytic mechanism. Residues 979 to 988 are interaction with DNA; the sequence is KLRSYIHTSN.

It belongs to the type II topoisomerase family. Mg(2+) serves as cofactor. Requires Mn(2+) as cofactor. It depends on Ca(2+) as a cofactor.

It catalyses the reaction ATP-dependent breakage, passage and rejoining of double-stranded DNA.. Functionally, can introduce negative superhelical turns into double-stranded circular DNA. The sequence is that of DNA topoisomerase 2 (TOP2) from Acheta domesticus (House cricket).